The chain runs to 284 residues: uncharacterized protein (284 aa).

The signal sequence occupies residues 1–23 (MKRGCAIAVMICGLITSVSAASA).

This sequence belongs to the surface antigen msp4 family.

This is an uncharacterized protein from Brucella suis biovar 1 (strain 1330).